We begin with the raw amino-acid sequence, 678 residues long: Pescadillo homolog (678 aa).

Residues 265-289 (PQQQTKTNNTTKKSKSTTAAAAATT) are disordered. Low complexity predominate over residues 269–289 (TKTNNTTKKSKSTTAAAAATT). One can recognise a BRCT domain in the interval 352 to 442 (DVTTLFKGFH…LLLPYSEYTI (91 aa)). Disordered stretches follow at residues 485–601 (TNAE…EDTK) and 626–678 (ATAN…KQKK). Acidic residues predominate over residues 505–518 (SDGESDDEDDEDLE). Positions 519–531 (HLETRYTEELRKE) are enriched in basic and acidic residues. The segment covering 541–574 (VDDDDEEEEDGEEDGEEEEEEEDGEEESESESES) has biased composition (acidic residues). Residues 581–640 (VLTKKQRDELNKQKQAEEDTKLAELMIRKKDKWIYNKVKETNQQRATANQTLLEKRNKVE) adopt a coiled-coil conformation. Composition is skewed to basic and acidic residues over residues 585–601 (KQRDELNKQKQAEEDTK) and 633–643 (LEKRNKVESGK). Low complexity predominate over residues 649-678 (VKVAPQPKKPAPLVKKSQQKQQQASKKQKK).

This sequence belongs to the pescadillo family.

The protein localises to the nucleus. It is found in the nucleolus. The protein resides in the nucleoplasm. Required for maturation of ribosomal RNAs and formation of the large ribosomal subunit. In Dictyostelium discoideum (Social amoeba), this protein is Pescadillo homolog.